A 161-amino-acid polypeptide reads, in one-letter code: Nucleotide-binding protein XAC3671 (161 aa).

It belongs to the YajQ family.

Nucleotide-binding protein. The polypeptide is Nucleotide-binding protein XAC3671 (Xanthomonas axonopodis pv. citri (strain 306)).